A 440-amino-acid chain; its full sequence is F-box protein pof12 (440 aa).

One can recognise an F-box domain in the interval 8 to 54 (KNPASIFSHETLLHVLNDLSAHDLAALERVSRSWNSIVRRSSVWHNL).

Interacts with skp1.

It localises to the nucleus. The sequence is that of F-box protein pof12 (pof12) from Schizosaccharomyces pombe (strain 972 / ATCC 24843) (Fission yeast).